The sequence spans 206 residues: Ribosomal RNA large subunit methyltransferase E (206 aa).

Residues G55, W57, D75, D91, and D116 each coordinate S-adenosyl-L-methionine. Catalysis depends on K156, which acts as the Proton acceptor.

Belongs to the class I-like SAM-binding methyltransferase superfamily. RNA methyltransferase RlmE family.

The protein resides in the cytoplasm. It carries out the reaction uridine(2552) in 23S rRNA + S-adenosyl-L-methionine = 2'-O-methyluridine(2552) in 23S rRNA + S-adenosyl-L-homocysteine + H(+). Functionally, specifically methylates the uridine in position 2552 of 23S rRNA at the 2'-O position of the ribose in the fully assembled 50S ribosomal subunit. The chain is Ribosomal RNA large subunit methyltransferase E from Blochmanniella floridana.